The following is a 226-amino-acid chain: Deoxyribose-phosphate aldolase (226 aa).

The active-site Proton donor/acceptor is D84. K146 acts as the Schiff-base intermediate with acetaldehyde in catalysis. Residue K188 is the Proton donor/acceptor of the active site.

This sequence belongs to the DeoC/FbaB aldolase family. DeoC type 1 subfamily.

It localises to the cytoplasm. It catalyses the reaction 2-deoxy-D-ribose 5-phosphate = D-glyceraldehyde 3-phosphate + acetaldehyde. Its pathway is carbohydrate degradation; 2-deoxy-D-ribose 1-phosphate degradation; D-glyceraldehyde 3-phosphate and acetaldehyde from 2-deoxy-alpha-D-ribose 1-phosphate: step 2/2. Functionally, catalyzes a reversible aldol reaction between acetaldehyde and D-glyceraldehyde 3-phosphate to generate 2-deoxy-D-ribose 5-phosphate. The chain is Deoxyribose-phosphate aldolase from Pyrobaculum arsenaticum (strain DSM 13514 / JCM 11321 / PZ6).